Reading from the N-terminus, the 181-residue chain is ADP-ribosylation factor 3 (181 aa).

Glycine 2 carries N-myristoyl glycine lipidation. Residues 24 to 31 (GLDAAGKT), 67 to 71 (DVGGQ), and 126 to 129 (NKQD) each bind GTP.

The protein belongs to the small GTPase superfamily. Arf family. Interacts with PRKCABP. Interacts with PI4KB and NCS1/FREQ at the Golgi complex.

Its subcellular location is the golgi apparatus. It localises to the cytoplasm. The protein localises to the perinuclear region. Functionally, GTP-binding protein that functions as an allosteric activator of the cholera toxin catalytic subunit, an ADP-ribosyltransferase. Involved in protein trafficking; may modulate vesicle budding and uncoating within the Golgi apparatus. The protein is ADP-ribosylation factor 3 (ARF3) of Bos taurus (Bovine).